A 324-amino-acid chain; its full sequence is Acetyl-coenzyme A carboxylase carboxyl transferase subunit alpha (324 aa).

The region spanning 44–298 is the CoA carboxyltransferase C-terminal domain; that stretch reads RFQNQLVKLQ…KKELTEQLDS (255 aa).

Belongs to the AccA family. As to quaternary structure, acetyl-CoA carboxylase is a heterohexamer composed of biotin carboxyl carrier protein (accB), biotin carboxylase (accC) and two subunits each of ACCase subunit alpha (accA) and ACCase subunit beta (accD).

It localises to the plastid. It is found in the chloroplast. The enzyme catalyses N(6)-carboxybiotinyl-L-lysyl-[protein] + acetyl-CoA = N(6)-biotinyl-L-lysyl-[protein] + malonyl-CoA. Its pathway is lipid metabolism; malonyl-CoA biosynthesis; malonyl-CoA from acetyl-CoA: step 1/1. Component of the acetyl coenzyme A carboxylase (ACC) complex. First, biotin carboxylase catalyzes the carboxylation of biotin on its carrier protein (BCCP) and then the CO(2) group is transferred by the carboxyltransferase to acetyl-CoA to form malonyl-CoA. This Pyropia yezoensis (Susabi-nori) protein is Acetyl-coenzyme A carboxylase carboxyl transferase subunit alpha.